A 379-amino-acid polypeptide reads, in one-letter code: Cathepsin B-like cysteine proteinase 6 (379 aa).

The N-terminal stretch at 1–16 is a signal peptide; it reads MKTLLFLSCIVVAAYC. Residues 17-104 constitute a propeptide that is removed on maturation; sequence ACNDNLESVL…LSKTKDLDLD (88 aa). 6 cysteine pairs are disulfide-bonded: Cys118/Cys147, Cys130/Cys174, Cys166/Cys233, Cys167/Cys170, Cys203/Cys237, and Cys211/Cys223. The active site involves Cys133. Asn196 carries N-linked (GlcNAc...) asparagine glycosylation. Residue Asn201 is glycosylated (N-linked (GlcNAc...) asparagine; atypical). Catalysis depends on residues His305 and Asn325.

This sequence belongs to the peptidase C1 family.

The sequence is that of Cathepsin B-like cysteine proteinase 6 (cpr-6) from Caenorhabditis elegans.